The chain runs to 446 residues: Glutamyl-tRNA reductase (446 aa).

Residues 49 to 52, Ser107, 112 to 114, and Gln118 contribute to the substrate site; these read TCNR and EPQ. The Nucleophile role is filled by Cys50. Position 187–192 (187–192) interacts with NADP(+); sequence GAGETI. A disordered region spans residues 417–446; sequence NANEDTRESVDKEQTGTTQGAARGDQRSTG. Basic and acidic residues predominate over residues 420 to 430; that stretch reads EDTRESVDKEQ.

The protein belongs to the glutamyl-tRNA reductase family. In terms of assembly, homodimer.

The catalysed reaction is (S)-4-amino-5-oxopentanoate + tRNA(Glu) + NADP(+) = L-glutamyl-tRNA(Glu) + NADPH + H(+). It participates in porphyrin-containing compound metabolism; protoporphyrin-IX biosynthesis; 5-aminolevulinate from L-glutamyl-tRNA(Glu): step 1/2. Catalyzes the NADPH-dependent reduction of glutamyl-tRNA(Glu) to glutamate 1-semialdehyde (GSA). This is Glutamyl-tRNA reductase from Alkalilimnicola ehrlichii (strain ATCC BAA-1101 / DSM 17681 / MLHE-1).